Consider the following 205-residue polypeptide: MVDEQLRPRGVEAQAVLAAMAKVPRHRFVPPPYTRLAYEDRPLPIGHSQTISQPFIVAYMSEAARITPGAKVLEIGTGSGYQAAVLAEMGAEVYTVEIVPELAKRAERTLEELGYRSVRVRSGDGYQGWPQHAPFDAIVVTAAPERIPQPLIDQLAVNGRLIVPVGTQTEDQRMTVLTRTPGGIVEQKTFPVRFVPLTREKPQEH.

Residue Ser52 is part of the active site.

Belongs to the methyltransferase superfamily. L-isoaspartyl/D-aspartyl protein methyltransferase family.

The protein resides in the cytoplasm. It carries out the reaction [protein]-L-isoaspartate + S-adenosyl-L-methionine = [protein]-L-isoaspartate alpha-methyl ester + S-adenosyl-L-homocysteine. Catalyzes the methyl esterification of L-isoaspartyl residues in peptides and proteins that result from spontaneous decomposition of normal L-aspartyl and L-asparaginyl residues. It plays a role in the repair and/or degradation of damaged proteins. In Gloeobacter violaceus (strain ATCC 29082 / PCC 7421), this protein is Protein-L-isoaspartate O-methyltransferase.